Reading from the N-terminus, the 440-residue chain is Chromosome partition protein MukF (440 aa).

Residues 208 to 236 form a leucine-zipper region; sequence LSETSGTLRELQDTLEAAGDKLQANLLRI.

This sequence belongs to the MukF family. Interacts, and probably forms a ternary complex, with MukE and MukB via its C-terminal region. The complex formation is stimulated by calcium or magnesium. It is required for an interaction between MukE and MukB.

The protein resides in the cytoplasm. Its subcellular location is the nucleoid. Its function is as follows. Involved in chromosome condensation, segregation and cell cycle progression. May participate in facilitating chromosome segregation by condensation DNA from both sides of a centrally located replisome during cell division. Not required for mini-F plasmid partitioning. Probably acts via its interaction with MukB and MukE. Overexpression results in anucleate cells. It has a calcium binding activity. The protein is Chromosome partition protein MukF of Yersinia pestis.